We begin with the raw amino-acid sequence, 274 residues long: Urease accessory protein UreD 2 (274 aa).

This sequence belongs to the UreD family. As to quaternary structure, ureD, UreF and UreG form a complex that acts as a GTP-hydrolysis-dependent molecular chaperone, activating the urease apoprotein by helping to assemble the nickel containing metallocenter of UreC. The UreE protein probably delivers the nickel.

The protein resides in the cytoplasm. In terms of biological role, required for maturation of urease via the functional incorporation of the urease nickel metallocenter. The protein is Urease accessory protein UreD 2 of Brucella anthropi (strain ATCC 49188 / DSM 6882 / CCUG 24695 / JCM 21032 / LMG 3331 / NBRC 15819 / NCTC 12168 / Alc 37) (Ochrobactrum anthropi).